Reading from the N-terminus, the 179-residue chain is Large ribosomal subunit protein uL5 (179 aa).

The protein belongs to the universal ribosomal protein uL5 family. In terms of assembly, part of the 50S ribosomal subunit; part of the 5S rRNA/L5/L18/L25 subcomplex. Contacts the 5S rRNA and the P site tRNA. Forms a bridge to the 30S subunit in the 70S ribosome.

Its function is as follows. This is one of the proteins that bind and probably mediate the attachment of the 5S RNA into the large ribosomal subunit, where it forms part of the central protuberance. In the 70S ribosome it contacts protein S13 of the 30S subunit (bridge B1b), connecting the 2 subunits; this bridge is implicated in subunit movement. Contacts the P site tRNA; the 5S rRNA and some of its associated proteins might help stabilize positioning of ribosome-bound tRNAs. In Thiobacillus denitrificans (strain ATCC 25259 / T1), this protein is Large ribosomal subunit protein uL5.